The sequence spans 266 residues: MWYTTVRNPSIALIKQGYHILAEYNLVKEELKNIYAIPSYACGLHWFGVIFVHSGIYAGSVFRFSILLPDNFPADISLPTVVFSSAVLHPHICPQNKTLDLAHFLNEWRKDEHHIWHVLRYIQSIFADAEGSICTGQSSSGDLVVMDEVRNMDALNILVKSRPEYIERVQEQAILSRNLIYDRPPTEDPHYIIVEPYCAERHLKFMDQLKSPCWKEATSMDCSQPSEYLGHIDSSRQMDEEETNQLEKLHRGRIPEPQREEAEVSL.

In terms of domain architecture, UBC core spans 15–178; sequence KQGYHILAEY…VQEQAILSRN (164 aa). The disordered stretch occupies residues 226–266; it reads SEYLGHIDSSRQMDEEETNQLEKLHRGRIPEPQREEAEVSL. Positions 245-266 are enriched in basic and acidic residues; sequence QLEKLHRGRIPEPQREEAEVSL.

Belongs to the ubiquitin-conjugating enzyme family. FTS subfamily.

The polypeptide is Protein crossbronx-like (Drosophila sechellia (Fruit fly)).